The chain runs to 552 residues: N-acetylglucosamine-6-sulfatase (552 aa).

Positions 1–36 are cleaved as a signal peptide; sequence MRLLPLAPGRLRRGSPRHLPSCSPALLLLVLGGCLG. 3 residues coordinate Ca(2+): D55, D56, and C91. Catalysis depends on C91, which acts as the Nucleophile. 3-oxoalanine (Cys) is present on C91. Residues N111, N117, N183, N198, N210, N279, and N317 are each glycosylated (N-linked (GlcNAc...) asparagine). 2 residues coordinate Ca(2+): D326 and N327. N-linked (GlcNAc...) asparagine glycosylation is found at N362, N387, N405, N422, N449, and N480. The residue at position 541 (S541) is a Phosphoserine.

It belongs to the sulfatase family. It depends on Ca(2+) as a cofactor. In terms of processing, the form A (78 kDa) is processed by internal peptidase cleavage to a 32 kDa N-terminal species (form B) and a 48 kDa C-terminal species. The conversion to 3-oxoalanine (also known as C-formylglycine, FGly), of a serine or cysteine residue in prokaryotes and of a cysteine residue in eukaryotes, is critical for catalytic activity.

The protein localises to the lysosome. It carries out the reaction Hydrolysis of the 6-sulfate groups of the N-acetyl-D-glucosamine 6-sulfate units of heparan sulfate and keratan sulfate.. Hydrolyzes 6-sulfate groups in N-acetyl-d-glucosaminide units of heparin sulfate and keratan sulfate. The polypeptide is N-acetylglucosamine-6-sulfatase (GNS) (Homo sapiens (Human)).